A 176-amino-acid polypeptide reads, in one-letter code: Nuclear ribonuclease Z (176 aa).

It belongs to the RNase Z family. As to quaternary structure, homodimer. The cofactor is Zn(2+).

The protein resides in the nucleus. The enzyme catalyses Endonucleolytic cleavage of RNA, removing extra 3' nucleotides from tRNA precursor, generating 3' termini of tRNAs. A 3'-hydroxy group is left at the tRNA terminus and a 5'-phosphoryl group is left at the trailer molecule.. Zinc phosphodiesterase, which displays some tRNA 3'-processing endonuclease activity. Probably involved in tRNA maturation, by removing a 3'-trailer from precursor tRNA. This is Nuclear ribonuclease Z (ELAC) from Triticum aestivum (Wheat).